A 265-amino-acid chain; its full sequence is 3-methyl-2-oxobutanoate hydroxymethyltransferase (265 aa).

2 residues coordinate Mg(2+): Asp43 and Asp82. 3-methyl-2-oxobutanoate contacts are provided by residues Asp43 to Ser44, Asp82, and Lys111. Glu113 contributes to the Mg(2+) binding site. Glu180 functions as the Proton acceptor in the catalytic mechanism.

Belongs to the PanB family. In terms of assembly, homodecamer; pentamer of dimers. Mg(2+) is required as a cofactor.

It localises to the cytoplasm. It catalyses the reaction 3-methyl-2-oxobutanoate + (6R)-5,10-methylene-5,6,7,8-tetrahydrofolate + H2O = 2-dehydropantoate + (6S)-5,6,7,8-tetrahydrofolate. The protein operates within cofactor biosynthesis; (R)-pantothenate biosynthesis; (R)-pantoate from 3-methyl-2-oxobutanoate: step 1/2. Its function is as follows. Catalyzes the reversible reaction in which hydroxymethyl group from 5,10-methylenetetrahydrofolate is transferred onto alpha-ketoisovalerate to form ketopantoate. The sequence is that of 3-methyl-2-oxobutanoate hydroxymethyltransferase from Francisella tularensis subsp. novicida (strain U112).